A 331-amino-acid polypeptide reads, in one-letter code: Biotin synthase (331 aa).

The Radical SAM core domain occupies 52 to 277 (PDVEVEGIIS…RTMLRFAGGR (226 aa)). The [4Fe-4S] cluster site is built by C67, C71, and C74. Positions 110, 143, 202, and 272 each coordinate [2Fe-2S] cluster.

It belongs to the radical SAM superfamily. Biotin synthase family. Homodimer. It depends on [4Fe-4S] cluster as a cofactor. The cofactor is [2Fe-2S] cluster.

It carries out the reaction (4R,5S)-dethiobiotin + (sulfur carrier)-SH + 2 reduced [2Fe-2S]-[ferredoxin] + 2 S-adenosyl-L-methionine = (sulfur carrier)-H + biotin + 2 5'-deoxyadenosine + 2 L-methionine + 2 oxidized [2Fe-2S]-[ferredoxin]. Its pathway is cofactor biosynthesis; biotin biosynthesis; biotin from 7,8-diaminononanoate: step 2/2. Its function is as follows. Catalyzes the conversion of dethiobiotin (DTB) to biotin by the insertion of a sulfur atom into dethiobiotin via a radical-based mechanism. The polypeptide is Biotin synthase (Mycolicibacterium vanbaalenii (strain DSM 7251 / JCM 13017 / BCRC 16820 / KCTC 9966 / NRRL B-24157 / PYR-1) (Mycobacterium vanbaalenii)).